The sequence spans 589 residues: Probable translation initiation factor IF-2 (589 aa).

Residues leucine 14–glutamate 231 form the tr-type G domain. The G1 stretch occupies residues glycine 23–threonine 30. GTP is bound at residue glycine 23–threonine 30. The G2 stretch occupies residues glycine 48–arginine 52. A G3 region spans residues aspartate 84–glycine 87. Residues aspartate 84–histidine 88 and asparagine 138–aspartate 141 each bind GTP. The segment at asparagine 138–aspartate 141 is G4. Positions serine 206–lysine 208 are G5.

The protein belongs to the TRAFAC class translation factor GTPase superfamily. Classic translation factor GTPase family. IF-2 subfamily.

Its function is as follows. Function in general translation initiation by promoting the binding of the formylmethionine-tRNA to ribosomes. Seems to function along with eIF-2. The chain is Probable translation initiation factor IF-2 from Thermoplasma volcanium (strain ATCC 51530 / DSM 4299 / JCM 9571 / NBRC 15438 / GSS1).